The primary structure comprises 769 residues: Glutathione biosynthesis bifunctional protein GshAB (769 aa).

Residues M1 to I347 form a glutamate--cysteine ligase region. The 255-residue stretch at K514–F768 folds into the ATP-grasp domain. S541–R599 is an ATP binding site. 3 residues coordinate Mg(2+): D721, E738, and N740. Residues D721, E738, and N740 each coordinate Mn(2+).

This sequence in the N-terminal section; belongs to the glutamate--cysteine ligase type 1 family. Type 2 subfamily. As to quaternary structure, monomer. Requires Mg(2+) as cofactor. Mn(2+) is required as a cofactor.

It catalyses the reaction L-cysteine + L-glutamate + ATP = gamma-L-glutamyl-L-cysteine + ADP + phosphate + H(+). The enzyme catalyses gamma-L-glutamyl-L-cysteine + glycine + ATP = glutathione + ADP + phosphate + H(+). It functions in the pathway sulfur metabolism; glutathione biosynthesis; glutathione from L-cysteine and L-glutamate: step 1/2. It participates in sulfur metabolism; glutathione biosynthesis; glutathione from L-cysteine and L-glutamate: step 2/2. Its function is as follows. Synthesizes glutathione from L-glutamate and L-cysteine via gamma-L-glutamyl-L-cysteine. The polypeptide is Glutathione biosynthesis bifunctional protein GshAB (Listeria innocua serovar 6a (strain ATCC BAA-680 / CLIP 11262)).